Here is a 278-residue protein sequence, read N- to C-terminus: MTRYTKLFSALSAKNEGAFVPFIMLGAPTPEASLAIIRTVVAAGADALELGVPFSDPVADGPTIQRSHLRALDNGATVDSSLELIRQIRKEFPELPIGMLIYGNVAFTRGITQFYQEFADAGVDSILLPDVPVREGEPFIAAAKQAGIDPIFIAPAQASEATLEGVAQHSSGYIYAISRDGVTGTERQSSTRGLDKVVANVKRFGGAPILLGFGISTPEHVRDAIAAGASGAITGSALTSIIERHTTGTHPEPAQVTDLEALTEEIFAFVKDMKAATR.

Residues Glu-49 and Asp-60 each act as proton acceptor in the active site.

The protein belongs to the TrpA family. Tetramer of two alpha and two beta chains.

It catalyses the reaction (1S,2R)-1-C-(indol-3-yl)glycerol 3-phosphate + L-serine = D-glyceraldehyde 3-phosphate + L-tryptophan + H2O. The protein operates within amino-acid biosynthesis; L-tryptophan biosynthesis; L-tryptophan from chorismate: step 5/5. In terms of biological role, the alpha subunit is responsible for the aldol cleavage of indoleglycerol phosphate to indole and glyceraldehyde 3-phosphate. This chain is Tryptophan synthase alpha chain, found in Corynebacterium diphtheriae (strain ATCC 700971 / NCTC 13129 / Biotype gravis).